Reading from the N-terminus, the 675-residue chain is Envelope glycoprotein (675 aa).

The N-terminal stretch at 1-34 (MACSTLPKSPKDKIDPRDLLIPLILFLSLKGARS) is a signal peptide. The segment at 35 to 270 (AAPGSSPHQV…RYQNLGPRVP (236 aa)) is receptor-binding domain (RBD). The Extracellular segment spans residues 35–620 (AAPGSSPHQV…FNRSPWFTTL (586 aa)). A glycan (N-linked (GlcNAc...) asparagine; by host) is linked at asparagine 46. Intrachain disulfides connect cysteine 80–cysteine 132, cysteine 106–cysteine 121, cysteine 107–cysteine 117, cysteine 155–cysteine 175, and cysteine 167–cysteine 180. Position 89 (histidine 89) interacts with Zn(2+). Zn(2+) is bound at residue aspartate 120. N-linked (GlcNAc...) asparagine; by host glycosylation occurs at asparagine 202. Cysteine 212 and cysteine 218 form a disulfide bridge. Residues 276-323 (VLADQLSLPRPNPLPKPAKSPPASNSTPTLISPSPTPTQPPPAGTGDR) form a disordered region. Pro residues predominate over residues 285–295 (RPNPLPKPAKS). Low complexity predominate over residues 296 to 308 (PPASNSTPTLISP). The segment covering 309–318 (SPTPTQPPPA) has biased composition (pro residues). Asparagine 336 carries N-linked (GlcNAc...) asparagine; by host glycosylation. Disulfide bonds link cysteine 346-cysteine 349, cysteine 346-cysteine 573, cysteine 376-cysteine 430, cysteine 395-cysteine 407, cysteine 437-cysteine 450, and cysteine 565-cysteine 572. The CXXC signature appears at 346 to 349 (CWLC). N-linked (GlcNAc...) asparagine; by host glycosylation is found at asparagine 368 and asparagine 375. N-linked (GlcNAc...) asparagine; by host glycosylation is found at asparagine 408 and asparagine 444. The tract at residues 482-502 (VSLTLALLLGGLTMGGIAAGV) is fusion peptide. A coiled-coil region spans residues 513–547 (QQFQQLHAAVQDDLKEVEKSITNLEKSLTSLSEVV). An immunosuppression region spans residues 548–564 (LQNRRGLDLLFLKEGGL). Residues 565 to 573 (CAALKEECC) carry the CX6CC motif. A helical transmembrane segment spans residues 621 to 641 (ISTIMGPLIILLLILLFGPCI). Cysteine 640 is lipidated: S-palmitoyl cysteine; by host. Topologically, residues 642–675 (LNRLVQFVKDRISVVQALVLTQQYHQLKPLEYEP) are cytoplasmic. Residues 665-668 (YHQL) carry the YXXL motif; contains endocytosis signal motif.

As to quaternary structure, the mature envelope protein (Env) consists of a trimer of SU-TM heterodimers attached by a labile interchain disulfide bond. Specific enzymatic cleavages in vivo yield mature proteins. Envelope glycoproteins are synthesized as an inactive precursor that is N-glycosylated and processed likely by host cell furin or by a furin-like protease in the Golgi to yield the mature SU and TM proteins. The cleavage site between SU and TM requires the minimal sequence [KR]-X-[KR]-R. The R-peptide is released from the C-terminus of the cytoplasmic tail of the TM protein upon particle formation as a result of proteolytic cleavage by the viral protease. Cleavage of this peptide is required for TM to become fusogenic. In terms of processing, the CXXC motif is highly conserved across a broad range of retroviral envelope proteins. It is thought to participate in the formation of a labile disulfide bond possibly with the CX6CC motif present in the transmembrane protein. Isomerization of the intersubunit disulfide bond to an SU intrachain disulfide bond is thought to occur upon receptor recognition in order to allow membrane fusion. Post-translationally, the transmembrane protein is palmitoylated. The R-peptide is palmitoylated.

It is found in the virion membrane. The protein resides in the host cell membrane. The surface protein (SU) attaches the virus to the host cell by binding to its receptor. This interaction triggers the refolding of the transmembrane protein (TM) and is thought to activate its fusogenic potential by unmasking its fusion peptide. Fusion occurs at the host cell plasma membrane. In terms of biological role, the transmembrane protein (TM) acts as a class I viral fusion protein. Under the current model, the protein has at least 3 conformational states: pre-fusion native state, pre-hairpin intermediate state, and post-fusion hairpin state. During viral and target cell membrane fusion, the coiled coil regions (heptad repeats) assume a trimer-of-hairpins structure, positioning the fusion peptide in close proximity to the C-terminal region of the ectodomain. The formation of this structure appears to drive apposition and subsequent fusion of viral and target cell membranes. Membranes fusion leads to delivery of the nucleocapsid into the cytoplasm. In Mus musculus (Mouse), this protein is Envelope glycoprotein (env).